Consider the following 191-residue polypeptide: MIRGGALTHVALGLTVFLLLAVVHSQEKCSKTCIAQKCNVLGIRYGKYCGIGYFGCPGEPPCDDLDDCCMTHDNCVDLKGMTYVDCHKQFQRCVNELKQSIQESNNQKVGFSKECPYSTVIPTVYRGMNYGIFFSGIGNIIIPKKPASAGPVVEVDLARSKADTKDGLGTNQGPQTKDGSKVSVPMNPSPS.

Residues 1–25 (MIRGGALTHVALGLTVFLLLAVVHS) form the signal peptide. Cystine bridges form between C29–C56, C33–C62, C38–C115, C49–C69, C68–C93, and C75–C86. Y48, G50, and Y53 together coordinate Ca(2+). The active site involves H72. A Ca(2+)-binding site is contributed by D73. The tract at residues 161-191 (KADTKDGLGTNQGPQTKDGSKVSVPMNPSPS) is disordered.

The protein belongs to the phospholipase A2 family. The cofactor is Ca(2+). Specifically expressed in flowers but at a low level. Detected specifically in the pollen.

Its subcellular location is the secreted. The protein resides in the endoplasmic reticulum. It catalyses the reaction a 1,2-diacyl-sn-glycero-3-phosphocholine + H2O = a 1-acyl-sn-glycero-3-phosphocholine + a fatty acid + H(+). In terms of biological role, PA2 catalyzes the calcium-dependent hydrolysis of the 2-acyl groups in 3-sn-phosphoglycerides. Releases lysophospholipids (LPLs) and free fatty acids (FFAs) from membrane phospholipids in response to hormones and other external stimuli. Plays a role in pollen development and germination and tube growth. In Arabidopsis thaliana (Mouse-ear cress), this protein is Phospholipase A2-delta (PLA2-DELTA).